The primary structure comprises 38 residues: MKVRASIKKMCRNCKLVRRKGVLRVICSAEPRHKQRQG.

It belongs to the bacterial ribosomal protein bL36 family.

The polypeptide is Large ribosomal subunit protein bL36 (Saccharophagus degradans (strain 2-40 / ATCC 43961 / DSM 17024)).